A 288-amino-acid polypeptide reads, in one-letter code: MNFIGKILGFIIGYRFGGLFGGIAGLILGHIADKKLYELGSVNSSFFSKKITRQSLFMQTTFAVLGHLSKAKGRVTEEDIQLANNLMSQMQLDVANRQLAQNAFNRGKEADFPVREVIREFRIGCGQRADLLRMFLHIQVQAAFADSNLHNNEKELLFVIAEELGLSRFQFDQMLAMEMAARQFTQGGFYRQQQYQQQSHQQYNQENYQNSYRTSSGPTVEDAYKVLGVNAGDNQQTVKRAYRRLMNEHHPDKLVAKGLPKEMMEMAKEKAQQIQAAYDLICKVKGWK.

Topologically, residues 1 to 6 are periplasmic; the sequence is MNFIGK. Residues 7–30 traverse the membrane as a helical segment; the sequence is ILGFIIGYRFGGLFGGIAGLILGH. Residues 31–288 lie on the Cytoplasmic side of the membrane; it reads IADKKLYELG…DLICKVKGWK (258 aa). A J domain is found at 222–288; that stretch reads DAYKVLGVNA…DLICKVKGWK (67 aa).

Homodimer.

The protein resides in the cell inner membrane. In terms of biological role, regulatory DnaK co-chaperone. Direct interaction between DnaK and DjlA is needed for the induction of the wcaABCDE operon, involved in the synthesis of a colanic acid polysaccharide capsule, possibly through activation of the RcsB/RcsC phosphotransfer signaling pathway. The colanic acid capsule may help the bacterium survive conditions outside the host. The polypeptide is Co-chaperone protein DjlA (Mannheimia succiniciproducens (strain KCTC 0769BP / MBEL55E)).